The chain runs to 421 residues: ATP phosphoribosyltransferase regulatory subunit (421 aa).

This sequence belongs to the class-II aminoacyl-tRNA synthetase family. HisZ subfamily. Heteromultimer composed of HisG and HisZ subunits.

The protein localises to the cytoplasm. It functions in the pathway amino-acid biosynthesis; L-histidine biosynthesis; L-histidine from 5-phospho-alpha-D-ribose 1-diphosphate: step 1/9. Its function is as follows. Required for the first step of histidine biosynthesis. May allow the feedback regulation of ATP phosphoribosyltransferase activity by histidine. The protein is ATP phosphoribosyltransferase regulatory subunit of Clostridium novyi (strain NT).